The chain runs to 222 residues: Orotate phosphoribosyltransferase (222 aa).

Residue lysine 29 participates in 5-phospho-alpha-D-ribose 1-diphosphate binding. 37–38 serves as a coordination point for orotate; the sequence is FF. 5-phospho-alpha-D-ribose 1-diphosphate-binding positions include 75–76, arginine 101, lysine 102, lysine 105, histidine 107, and 126–134; these read YK and DDVISAGTS. 2 residues coordinate orotate: serine 130 and arginine 158.

This sequence belongs to the purine/pyrimidine phosphoribosyltransferase family. PyrE subfamily. As to quaternary structure, homodimer. Mg(2+) is required as a cofactor.

The enzyme catalyses orotidine 5'-phosphate + diphosphate = orotate + 5-phospho-alpha-D-ribose 1-diphosphate. It functions in the pathway pyrimidine metabolism; UMP biosynthesis via de novo pathway; UMP from orotate: step 1/2. Its function is as follows. Catalyzes the transfer of a ribosyl phosphate group from 5-phosphoribose 1-diphosphate to orotate, leading to the formation of orotidine monophosphate (OMP). The chain is Orotate phosphoribosyltransferase from Polynucleobacter asymbioticus (strain DSM 18221 / CIP 109841 / QLW-P1DMWA-1) (Polynucleobacter necessarius subsp. asymbioticus).